The primary structure comprises 1485 residues: Cystic fibrosis transmembrane conductance regulator (1485 aa).

Residues 1-78 (MQRSPVEDAN…SLLRAMARCY (78 aa)) lie on the Cytoplasmic side of the membrane. A helical membrane pass occupies residues 79–99 (IKPFLLFGFLLYIGEATKTVQ). The ABC transmembrane type-1 1 domain maps to 83–353 (LLFGFLLYIG…CMVLRMTVTR (271 aa)). Over 100 to 123 (PQLLGRIIASFDPAHEPERANGYF) the chain is Extracellular. The chain crosses the membrane as a helical span at residues 124 to 149 (LAFGLGLLFTARFLLLQPAMFGLHHL). Topologically, residues 150-195 (GMQIRIALFSIIYKKTLKLSSRVLDKISTGQLVSLMSANLGKFDQS) are cytoplasmic. Residues 196 to 216 (LGMAHFIWISPLQCILCTGLI) form a helical membrane-spanning segment. At 217-224 (WELIDVNS) the chain is on the extracellular side. A helical membrane pass occupies residues 225–245 (FCALAAISLLGVLQAFLSHKM). The Cytoplasmic segment spans residues 246 to 299 (GPYKAQKVLLTNKRLALTSEIMENLHSVKAYGWEEIMETLIKNIRQDEVKLTRK). The helical transmembrane segment at 300-320 (IGSLRYFYSSAYFFSAIFVIV) threads the bilayer. Topologically, residues 321–340 (AAVVPHALSRGINLRRIFTT) are extracellular. A helical membrane pass occupies residues 341 to 363 (LSYCMVLRMTVTRQLPGSIQMWY). Over 364 to 856 (DTMRLIWKIE…YVRYVSNNKS (493 aa)) the chain is Cytoplasmic. Residues Trp-402, 457 to 464 (GSMGSGKS), and Gln-492 each bind ATP. The ABC transporter 1 domain maps to 424–645 (NGDAGLFFTN…RPDFSSLLLG (222 aa)). A disordered R region region spans residues 653-826 (SAERRCSILT…GILEEENIEA (174 aa)). Residues 857–877 (LLYVLIFILFIAAIEIAGSVA) traverse the membrane as a helical segment. Residues 860-1163 (VLIFILFIAA…CVATSIAVDG (304 aa)) enclose the ABC transmembrane type-1 2 domain. The Extracellular segment spans residues 878–924 (GIFLITDELWREEHQRSEPNMTKHSNASSSGQTYAITVTPTSSYYIL). N-linked (GlcNAc...) asparagine glycosylation is found at Asn-897 and Asn-903. A discontinuously helical membrane pass occupies residues 925–946 (YIYVATSESLLAMGFFRGLPFV). The Cytoplasmic segment spans residues 947–996 (HTTITISKKLHQKMLHAVLSAPMSVLNTMKTGRIMNRFTKDMATIDDMLP). Residues 997 to 1019 (LLMFDFVQLTVVVVGCILVVSIV) form a helical membrane-spanning segment. Residues 1020–1021 (RP) are Extracellular-facing. The chain crosses the membrane as a helical span at residues 1022–1042 (YIFLAATPLAIIFIVMRKYFL). Residues 1043–1103 (RTGQQLKQLE…TATWFLYLST (61 aa)) are Cytoplasmic-facing. Residues 1104–1124 (LRWFLFRADILFVFFFTLAAW) form a helical membrane-spanning segment. The Extracellular segment spans residues 1125–1138 (IAVGTNQDKPGEIG). The chain crosses the membrane as a helical span at residues 1139–1159 (IIICLAMLILGTFQWCVATSI). Over 1160–1485 (AVDGMMRSVD…AEDNIQDTRL (326 aa)) the chain is Cytoplasmic. Residues 1211–1444 (IEVRNLTVKY…TSHLKQAISP (234 aa)) form the ABC transporter 2 domain. ATP is bound by residues Tyr-1220 and 1245–1252 (GRTGSGKS). The segment at 1452 to 1485 (PRRNSSMRTPQSKLSSVTQTLQEEAEDNIQDTRL) is disordered. Over residues 1454 to 1473 (RNSSMRTPQSKLSSVTQTLQ) the composition is skewed to polar residues. Acidic residues predominate over residues 1474-1485 (EEAEDNIQDTRL). The short motif at 1483-1485 (TRL) is the PDZ-binding element.

It belongs to the ABC transporter superfamily. ABCC family. CFTR transporter (TC 3.A.1.202) subfamily. As to quaternary structure, monomer; does not require oligomerization for channel activity. Interacts with cse1l; this interaction may down-regulate cftr activity. Post-translationally, phosphorylated; this activates the channel. Dephosphorylation strongly decreases ATPase activity. Phosphorylation at PKA sites activates the channel. Phosphorylation at PKC sites enhances the response to phosphorylation by PKA. Detected in gut epithelium (at protein level). Detected in kidney, spleen, intestine and liver. Detected in pancreatic duct epithelium at 5 dpf and throughout adult life.

Its subcellular location is the apical cell membrane. It localises to the early endosome membrane. The protein resides in the cell membrane. The protein localises to the recycling endosome membrane. It is found in the endoplasmic reticulum membrane. The enzyme catalyses ATP + H2O + closed Cl(-) channel = ADP + phosphate + open Cl(-) channel.. The catalysed reaction is chloride(in) = chloride(out). It carries out the reaction hydrogencarbonate(in) = hydrogencarbonate(out). It catalyses the reaction ATP + H2O = ADP + phosphate + H(+). Functionally, epithelial ion channel that plays an important role in the regulation of epithelial ion and water transport and fluid homeostasis. Mediates the transport of chloride ions across the cell membrane. Possesses an intrinsic ATPase activity and utilizes ATP to gate its channel; the passive flow of anions through the channel is gated by cycles of ATP binding and hydrolysis by the ATP-binding domains. The ion channel is also permeable to HCO(3)(-); selectivity depends on the extracellular chloride concentration. Exerts its function also by modulating the activity of other ion channels and transporters. Contributes to the regulation of the pH and the ion content of the epithelial fluid layer. Required for normal fluid homeostasis in the gut. Required for normal volume expansion and cell shape changes of Kupffer's vesicle during embryonic development and for normal establishment of left-right body patterning. Required for normal resistance to infection by P.aeruginosa strain PA14 and strain SMC573. This is Cystic fibrosis transmembrane conductance regulator from Danio rerio (Zebrafish).